Consider the following 93-residue polypeptide: Putative regulatory protein LBL_1834 (93 aa).

The protein belongs to the RemA family.

This chain is Putative regulatory protein LBL_1834, found in Leptospira borgpetersenii serovar Hardjo-bovis (strain L550).